A 153-amino-acid chain; its full sequence is Superoxide dismutase [Cu-Zn] (153 aa).

Cu cation-binding residues include H45, H47, and H62. Cysteines 56 and 145 form a disulfide. Zn(2+) is bound by residues H62, H70, H79, and D82. Residue H119 coordinates Cu cation.

The protein belongs to the Cu-Zn superoxide dismutase family. Homodimer. It depends on Cu cation as a cofactor. The cofactor is Zn(2+).

It localises to the cytoplasm. It carries out the reaction 2 superoxide + 2 H(+) = H2O2 + O2. Destroys radicals which are normally produced within the cells and which are toxic to biological systems. The sequence is that of Superoxide dismutase [Cu-Zn] from Drosophila teissieri (Fruit fly).